A 349-amino-acid chain; its full sequence is Isopentenyl-diphosphate delta-isomerase (349 aa).

Residue arginine 9–lysine 10 participates in substrate binding. FMN-binding positions include alanine 65–threonine 67, serine 95, and asparagine 124. A substrate-binding site is contributed by serine 95 to histidine 97. Glutamine 154 serves as a coordination point for substrate. Glutamate 155 serves as a coordination point for Mg(2+). FMN-binding positions include lysine 186, serine 211, threonine 216, glycine 262–arginine 264, and serine 283–arginine 284.

Belongs to the IPP isomerase type 2 family. Homooctamer. Dimer of tetramers. Requires FMN as cofactor. It depends on NADPH as a cofactor. Mg(2+) serves as cofactor.

Its subcellular location is the cytoplasm. It carries out the reaction isopentenyl diphosphate = dimethylallyl diphosphate. Its function is as follows. Involved in the biosynthesis of isoprenoids. Catalyzes the 1,3-allylic rearrangement of the homoallylic substrate isopentenyl (IPP) to its allylic isomer, dimethylallyl diphosphate (DMAPP). The polypeptide is Isopentenyl-diphosphate delta-isomerase (Staphylococcus aureus).